We begin with the raw amino-acid sequence, 169 residues long: Protein GrpE (169 aa).

The tract at residues Met-1–Leu-25 is disordered. Over residues Asn-7–Asn-23 the composition is skewed to polar residues.

The protein belongs to the GrpE family. As to quaternary structure, homodimer.

It localises to the cytoplasm. Participates actively in the response to hyperosmotic and heat shock by preventing the aggregation of stress-denatured proteins, in association with DnaK and GrpE. It is the nucleotide exchange factor for DnaK and may function as a thermosensor. Unfolded proteins bind initially to DnaJ; upon interaction with the DnaJ-bound protein, DnaK hydrolyzes its bound ATP, resulting in the formation of a stable complex. GrpE releases ADP from DnaK; ATP binding to DnaK triggers the release of the substrate protein, thus completing the reaction cycle. Several rounds of ATP-dependent interactions between DnaJ, DnaK and GrpE are required for fully efficient folding. The polypeptide is Protein GrpE (Campylobacter lari (strain RM2100 / D67 / ATCC BAA-1060)).